A 103-amino-acid polypeptide reads, in one-letter code: Co-chaperonin GroES (103 aa).

This sequence belongs to the GroES chaperonin family. In terms of assembly, heptamer of 7 subunits arranged in a ring. Interacts with the chaperonin GroEL.

The protein localises to the cytoplasm. In terms of biological role, together with the chaperonin GroEL, plays an essential role in assisting protein folding. The GroEL-GroES system forms a nano-cage that allows encapsulation of the non-native substrate proteins and provides a physical environment optimized to promote and accelerate protein folding. GroES binds to the apical surface of the GroEL ring, thereby capping the opening of the GroEL channel. The chain is Co-chaperonin GroES from Synechocystis sp. (strain ATCC 27184 / PCC 6803 / Kazusa).